A 235-amino-acid chain; its full sequence is Elongation factor Tu (235 aa).

The tr-type G domain occupies 1-125 (KNMITGAAQM…QVDEYIPAPE (125 aa)). Residue 47–50 (NKQD) participates in GTP binding.

It belongs to the TRAFAC class translation factor GTPase superfamily. Classic translation factor GTPase family. EF-Tu/EF-1A subfamily. Monomer.

Its subcellular location is the cytoplasm. The catalysed reaction is GTP + H2O = GDP + phosphate + H(+). In terms of biological role, GTP hydrolase that promotes the GTP-dependent binding of aminoacyl-tRNA to the A-site of ribosomes during protein biosynthesis. In Leptolyngbya ectocarpi (Phormidium ectocarpi), this protein is Elongation factor Tu (tufA).